Reading from the N-terminus, the 196-residue chain is Carnitine operon protein CaiE (196 aa).

The tract at residues 173 to 196 (TQPLRQMEENRPRLQGTTDVTPKR) is disordered. A compositionally biased stretch (polar residues) spans 187-196 (QGTTDVTPKR).

It belongs to the transferase hexapeptide repeat family.

It functions in the pathway amine and polyamine metabolism; carnitine metabolism. Functionally, overproduction of CaiE stimulates the activity of CaiB and CaiD. This is Carnitine operon protein CaiE from Shigella dysenteriae serotype 1 (strain Sd197).